Here is a 277-residue protein sequence, read N- to C-terminus: Large ribosomal subunit protein uL2 (277 aa).

2 disordered regions span residues 36-55 and 213-277; these read PLPK…RHHG and WKGI…RKKK.

The protein belongs to the universal ribosomal protein uL2 family. Part of the 50S ribosomal subunit. Forms a bridge to the 30S subunit in the 70S ribosome.

In terms of biological role, one of the primary rRNA binding proteins. Required for association of the 30S and 50S subunits to form the 70S ribosome, for tRNA binding and peptide bond formation. It has been suggested to have peptidyltransferase activity; this is somewhat controversial. Makes several contacts with the 16S rRNA in the 70S ribosome. This Staphylococcus aureus (strain bovine RF122 / ET3-1) protein is Large ribosomal subunit protein uL2.